Reading from the N-terminus, the 193-residue chain is Surfactant protein C (193 aa).

Residues 1–23 (MDMSSKEVLMESPPDYSAGPRSQ) constitute a propeptide that is removed on maturation. 2 S-palmitoyl cysteine lipidation sites follow: Cys-28 and Cys-29. Positions 59 to 193 (HMSQKHTEMV…LCGELPLYYI (135 aa)) are excised as a propeptide. In terms of domain architecture, BRICHOS spans 94–193 (FSIGSTGIVV…LCGELPLYYI (100 aa)). An intrachain disulfide couples Cys-121 to Cys-185. The tract at residues 147-170 (KPSTPTSKLGQEEGHDTGSESDSS) is disordered.

It is found in the secreted. It localises to the extracellular space. The protein localises to the surface film. Functionally, pulmonary surfactant associated proteins promote alveolar stability by lowering the surface tension at the air-liquid interface in the peripheral air spaces. This chain is Surfactant protein C, found in Mus musculus (Mouse).